Here is a 562-residue protein sequence, read N- to C-terminus: Dihydroxy-acid dehydratase (562 aa).

Residue C55 coordinates [2Fe-2S] cluster. D87 is a binding site for Mg(2+). [2Fe-2S] cluster is bound at residue C128. 2 residues coordinate Mg(2+): D129 and K130. K130 bears the N6-carboxylysine mark. Residue C200 coordinates [2Fe-2S] cluster. A Mg(2+)-binding site is contributed by E451. S477 serves as the catalytic Proton acceptor.

This sequence belongs to the IlvD/Edd family. Homodimer. It depends on [2Fe-2S] cluster as a cofactor. Mg(2+) is required as a cofactor.

The catalysed reaction is (2R)-2,3-dihydroxy-3-methylbutanoate = 3-methyl-2-oxobutanoate + H2O. The enzyme catalyses (2R,3R)-2,3-dihydroxy-3-methylpentanoate = (S)-3-methyl-2-oxopentanoate + H2O. It functions in the pathway amino-acid biosynthesis; L-isoleucine biosynthesis; L-isoleucine from 2-oxobutanoate: step 3/4. The protein operates within amino-acid biosynthesis; L-valine biosynthesis; L-valine from pyruvate: step 3/4. In terms of biological role, functions in the biosynthesis of branched-chain amino acids. Catalyzes the dehydration of (2R,3R)-2,3-dihydroxy-3-methylpentanoate (2,3-dihydroxy-3-methylvalerate) into 2-oxo-3-methylpentanoate (2-oxo-3-methylvalerate) and of (2R)-2,3-dihydroxy-3-methylbutanoate (2,3-dihydroxyisovalerate) into 2-oxo-3-methylbutanoate (2-oxoisovalerate), the penultimate precursor to L-isoleucine and L-valine, respectively. This Cytophaga hutchinsonii (strain ATCC 33406 / DSM 1761 / CIP 103989 / NBRC 15051 / NCIMB 9469 / D465) protein is Dihydroxy-acid dehydratase.